A 270-amino-acid chain; its full sequence is 3-methyl-2-oxobutanoate hydroxymethyltransferase (270 aa).

Asp-43 and Asp-82 together coordinate Mg(2+). Residues 43 to 44 (DS), Asp-82, and Lys-112 each bind 3-methyl-2-oxobutanoate. Mg(2+) is bound at residue Glu-114. The active-site Proton acceptor is the Glu-179.

Belongs to the PanB family. In terms of assembly, homodecamer; pentamer of dimers. Mg(2+) serves as cofactor.

It is found in the cytoplasm. The enzyme catalyses 3-methyl-2-oxobutanoate + (6R)-5,10-methylene-5,6,7,8-tetrahydrofolate + H2O = 2-dehydropantoate + (6S)-5,6,7,8-tetrahydrofolate. The protein operates within cofactor biosynthesis; (R)-pantothenate biosynthesis; (R)-pantoate from 3-methyl-2-oxobutanoate: step 1/2. In terms of biological role, catalyzes the reversible reaction in which hydroxymethyl group from 5,10-methylenetetrahydrofolate is transferred onto alpha-ketoisovalerate to form ketopantoate. The polypeptide is 3-methyl-2-oxobutanoate hydroxymethyltransferase (Staphylococcus carnosus (strain TM300)).